Here is a 167-residue protein sequence, read N- to C-terminus: NAD(P)H-quinone oxidoreductase subunit I, chloroplastic (167 aa).

2 consecutive 4Fe-4S ferredoxin-type domains span residues 55-84 (GRIHFEFDKCIACEVCVRVCPIDLPVVDWK) and 95-124 (LNYSIDFGICIFCGNCVEYCPTNCLSMTEE). Residues C64, C67, C70, C74, C104, C107, C110, and C114 each coordinate [4Fe-4S] cluster.

It belongs to the complex I 23 kDa subunit family. NDH is composed of at least 16 different subunits, 5 of which are encoded in the nucleus. [4Fe-4S] cluster is required as a cofactor.

It localises to the plastid. The protein localises to the chloroplast thylakoid membrane. The enzyme catalyses a plastoquinone + NADH + (n+1) H(+)(in) = a plastoquinol + NAD(+) + n H(+)(out). The catalysed reaction is a plastoquinone + NADPH + (n+1) H(+)(in) = a plastoquinol + NADP(+) + n H(+)(out). NDH shuttles electrons from NAD(P)H:plastoquinone, via FMN and iron-sulfur (Fe-S) centers, to quinones in the photosynthetic chain and possibly in a chloroplast respiratory chain. The immediate electron acceptor for the enzyme in this species is believed to be plastoquinone. Couples the redox reaction to proton translocation, and thus conserves the redox energy in a proton gradient. This Solanum tuberosum (Potato) protein is NAD(P)H-quinone oxidoreductase subunit I, chloroplastic.